The following is a 74-amino-acid chain: Small ribosomal subunit protein eS17 (74 aa).

It belongs to the eukaryotic ribosomal protein eS17 family.

In Ignicoccus hospitalis (strain KIN4/I / DSM 18386 / JCM 14125), this protein is Small ribosomal subunit protein eS17.